The following is a 219-amino-acid chain: Probable nicotinate-nucleotide adenylyltransferase (219 aa).

Belongs to the NadD family.

The enzyme catalyses nicotinate beta-D-ribonucleotide + ATP + H(+) = deamido-NAD(+) + diphosphate. Its pathway is cofactor biosynthesis; NAD(+) biosynthesis; deamido-NAD(+) from nicotinate D-ribonucleotide: step 1/1. In terms of biological role, catalyzes the reversible adenylation of nicotinate mononucleotide (NaMN) to nicotinic acid adenine dinucleotide (NaAD). This chain is Probable nicotinate-nucleotide adenylyltransferase, found in Pseudomonas putida (strain GB-1).